A 396-amino-acid polypeptide reads, in one-letter code: Elongation factor Tu (396 aa).

In terms of domain architecture, tr-type G spans 10–206; the sequence is KPHVNIGTIG…AVDEYIPTPQ (197 aa). The G1 stretch occupies residues 19-26; the sequence is GHVDHGKT. 19-26 serves as a coordination point for GTP; that stretch reads GHVDHGKT. Threonine 26 lines the Mg(2+) pocket. Residues 60–64 are G2; it reads GITIS. The segment at 81–84 is G3; that stretch reads DCPG. GTP is bound by residues 81 to 85 and 136 to 139; these read DCPGH and NKVD. Positions 136 to 139 are G4; that stretch reads NKVD. The G5 stretch occupies residues 174 to 176; it reads SAL.

The protein belongs to the TRAFAC class translation factor GTPase superfamily. Classic translation factor GTPase family. EF-Tu/EF-1A subfamily. Monomer.

The protein localises to the cytoplasm. It catalyses the reaction GTP + H2O = GDP + phosphate + H(+). Functionally, GTP hydrolase that promotes the GTP-dependent binding of aminoacyl-tRNA to the A-site of ribosomes during protein biosynthesis. The polypeptide is Elongation factor Tu (Stigmatella aurantiaca).